Reading from the N-terminus, the 548-residue chain is SH2B adapter protein 3 (548 aa).

Residues 1–11 (MNEPTVQPSRT) are compositionally biased toward polar residues. Disordered regions lie at residues 1–25 (MNEP…RGWS), 78–108 (SLAG…DLGP), and 128–160 (RSAG…LLPW). The span at 12–21 (SSAPASPASP) shows a compositional bias: low complexity. Residues Ser-13, Ser-102, and Ser-129 each carry the phosphoserine modification. Over residues 137–148 (TSDTNDIDTTAA) the composition is skewed to polar residues. Residues 168–279 (EALKEVVLRY…WLAELRASTG (112 aa)) form the PH domain. Residues 290-313 (PLSLAAEPGPARSPRGSTDSLDQG) are disordered. At Ser-302 the chain carries Phosphoserine. Residues 336-434 (WFHGPISRVR…ACDVRLSGYV (99 aa)) enclose the SH2 domain.

The protein belongs to the SH2B adapter family. Post-translationally, tyrosine phosphorylated.

In terms of biological role, links T-cell receptor activation signal to phospholipase C-gamma-1, GRB2 and phosphatidylinositol 3-kinase. This is SH2B adapter protein 3 (Sh2b3) from Mus musculus (Mouse).